A 271-amino-acid polypeptide reads, in one-letter code: Signal recognition particle receptor subunit beta (271 aa).

The helical transmembrane segment at 37–57 (LLSVVVAVLAVLLTLVFWKLI) threads the bilayer. Residues 71–79 (GLCDSGKTL) and 92–95 (TQTS) each bind GTP. At Ser-112 the chain carries Phosphoserine. Residue Gly-120 coordinates GTP. Thr-214 carries the post-translational modification Phosphothreonine. Residue Ala-248 participates in GTP binding.

The protein belongs to the SRP receptor beta subunit family. In terms of assembly, heterodimer with SRPRA.

Its subcellular location is the endoplasmic reticulum membrane. Its function is as follows. Component of the signal recognition particle (SRP) complex receptor (SR). Ensures, in conjunction with the SRP complex, the correct targeting of the nascent secretory proteins to the endoplasmic reticulum membrane system. May mediate the membrane association of SR. The chain is Signal recognition particle receptor subunit beta (SRPRB) from Homo sapiens (Human).